A 193-amino-acid chain; its full sequence is Bifunctional protein PyrR (193 aa).

Residues 57-58, arginine 98, 119-127, arginine 152, and valine 176 contribute to the substrate site; these read TR and DDVLYSGRS. The short motif at 115 to 127 is the PRPP-binding element; that stretch reads VILVDDVLYSGRS.

The protein belongs to the purine/pyrimidine phosphoribosyltransferase family. PyrR subfamily.

The catalysed reaction is UMP + diphosphate = 5-phospho-alpha-D-ribose 1-diphosphate + uracil. Its function is as follows. Regulates the transcription of the pyrimidine nucleotide (pyr) operon in response to exogenous pyrimidines. Functionally, also displays a weak uracil phosphoribosyltransferase activity which is not physiologically significant. This is Bifunctional protein PyrR from Mycobacterium bovis (strain ATCC BAA-935 / AF2122/97).